Consider the following 189-residue polypeptide: Flavin prenyltransferase UbiX (189 aa).

FMN-binding positions include 10–12 (GAS), Ser36, 91–94 (STNT), and Arg126. Residues Tyr156 and Lys172 each contribute to the dimethylallyl phosphate site.

The protein belongs to the UbiX/PAD1 family.

It catalyses the reaction dimethylallyl phosphate + FMNH2 = prenylated FMNH2 + phosphate. Its function is as follows. Flavin prenyltransferase that catalyzes the synthesis of the prenylated FMN cofactor (prenyl-FMN) for 4-hydroxy-3-polyprenylbenzoic acid decarboxylase UbiD. The prenyltransferase is metal-independent and links a dimethylallyl moiety from dimethylallyl monophosphate (DMAP) to the flavin N5 and C6 atoms of FMN. The sequence is that of Flavin prenyltransferase UbiX from Aquifex aeolicus (strain VF5).